Consider the following 97-residue polypeptide: Small ribosomal subunit protein bS20 (97 aa).

Basic residues predominate over residues Arg76–Gly85. Residues Arg76 to Ser97 are disordered. A compositionally biased stretch (low complexity) spans Leu86–Ser97.

This sequence belongs to the bacterial ribosomal protein bS20 family.

In terms of biological role, binds directly to 16S ribosomal RNA. The sequence is that of Small ribosomal subunit protein bS20 from Microcystis aeruginosa (strain NIES-843 / IAM M-2473).